Here is a 100-residue protein sequence, read N- to C-terminus: MLALNNYLIISAILFSIGTIGVLVRRNAIVIFMCVEMMLNAVNLTFIAFSKYLGNIDGQIFVFFVMTVAAAEAAVGLALMIAFFKNRESIDVEDVNIMKW.

The next 3 helical transmembrane spans lie at 4–24 (LNNYLIISAILFSIGTIGVLV), 29–49 (IVIFMCVEMMLNAVNLTFIAF), and 60–80 (IFVFFVMTVAAAEAAVGLALM).

The protein belongs to the complex I subunit 4L family. NDH-1 is composed of 14 different subunits. Subunits NuoA, H, J, K, L, M, N constitute the membrane sector of the complex.

The protein resides in the cell inner membrane. It catalyses the reaction a quinone + NADH + 5 H(+)(in) = a quinol + NAD(+) + 4 H(+)(out). In terms of biological role, NDH-1 shuttles electrons from NADH, via FMN and iron-sulfur (Fe-S) centers, to quinones in the respiratory chain. The immediate electron acceptor for the enzyme in this species is believed to be ubiquinone. Couples the redox reaction to proton translocation (for every two electrons transferred, four hydrogen ions are translocated across the cytoplasmic membrane), and thus conserves the redox energy in a proton gradient. This is NADH-quinone oxidoreductase subunit K 1 from Geotalea daltonii (strain DSM 22248 / JCM 15807 / FRC-32) (Geobacter daltonii).